Here is a 520-residue protein sequence, read N- to C-terminus: MMKYYDLAKFTIYQIAEMDKGLSELSPMQQALIYSFCENHDKAIEVLDGISWNRAEMTMCALLAKVQMKAKRTKEAVEVLKKALDAISHSDKGPDATAISADCLYNLGLCYMEEGNLQMTYKLAITDLTTAISMDKNSYTAFYNRALCYTKIRELQMALTDYGIVLLLDATETVKLNTFLNRGLIYVELGQYGFALEDFKQAALISRTNGSLCHATAMCHHRINEFEEAVNFFTWALKINPCFLDAYVGRGNSYMEYGHDEATKQAQKDFLKALHINPAYIKARISFGYNLQAQGKFQKAWNHFTIAIDTDPKNYLAYEGRAVVCLQMGNNFAAMQDINAAMKISTTAEFLTNRGVIHEFMGHKQNAMKDYQDAITLNPKYSLAYFNAGNIYFHHRQFSQASDYFSKALKFDPENEYVLMNRAITNTILKKYEEAKEDFANVIESCPFWAAVYFNRAHFYYCLKQYELAEEDLNKALSLKPNDALVYNFRAKVRGKIGLIEEAMADYNQALDLEDYASVI.

TPR repeat units lie at residues 57 to 90 (MTMC…ISHS), 101 to 138 (ADCL…DKNS), 139 to 172 (YTAF…DATE), 176 to 209 (LNTF…SRTN), 210 to 243 (GSLC…NPCF), 245 to 280 (DAYV…NPAY), 281 to 314 (IKAR…DPKN), 320 to 347 (GRAV…ISTT), 348 to 381 (AEFL…NPKY), 382 to 415 (SLAY…DPEN), 416 to 449 (EYVL…CPFW), 450 to 483 (AAVY…KPND), and 484 to 517 (ALVY…EDYA).

The sequence is that of Tetratricopeptide repeat protein 6 from Homo sapiens (Human).